The sequence spans 280 residues: Gastrula zinc finger protein XlCGF46.1 (280 aa).

10 C2H2-type zinc fingers span residues Phe6–His28, Phe34–His56, Phe62–His84, Phe90–His112, Phe118–His140, Tyr146–His168, Phe174–His196, Phe202–His224, Phe230–His252, and Tyr258–His280.

The protein belongs to the krueppel C2H2-type zinc-finger protein family.

The protein resides in the nucleus. In terms of biological role, may be involved in transcriptional regulation. The polypeptide is Gastrula zinc finger protein XlCGF46.1 (Xenopus laevis (African clawed frog)).